The chain runs to 123 residues: Ribosome-binding factor A (123 aa).

It belongs to the RbfA family. As to quaternary structure, monomer. Binds 30S ribosomal subunits, but not 50S ribosomal subunits or 70S ribosomes.

It is found in the cytoplasm. One of several proteins that assist in the late maturation steps of the functional core of the 30S ribosomal subunit. Associates with free 30S ribosomal subunits (but not with 30S subunits that are part of 70S ribosomes or polysomes). Required for efficient processing of 16S rRNA. May interact with the 5'-terminal helix region of 16S rRNA. The protein is Ribosome-binding factor A of Ralstonia pickettii (strain 12J).